A 533-amino-acid polypeptide reads, in one-letter code: Decreased expression in renal and prostate cancer protein (533 aa).

The span at 1-12 (MKEPRIFPRERP) shows a compositional bias: basic and acidic residues. 4 disordered regions span residues 1–31 (MKEP…GGPV), 67–164 (QNPS…PDPR), 177–259 (MRAG…RAGG), and 299–350 (ASGN…PNSA). Ser-160 is subject to Phosphoserine. Residues 299-309 (ASGNMGTNPPT) show a composition bias toward polar residues. Residue Arg-368 is modified to Asymmetric dimethylarginine. Arg-396 carries the post-translational modification Omega-N-methylarginine. Ser-432 bears the Phosphoserine mark.

This sequence belongs to the DERPC family.

It is found in the nucleus. Functionally, potential tumor suppressor. The polypeptide is Decreased expression in renal and prostate cancer protein (Mus musculus (Mouse)).